We begin with the raw amino-acid sequence, 947 residues long: Nonribosomal peptide synthetase ucdA (947 aa).

Residues 25-413 (YSPHANAGYC…AGPVVFKEYF (389 aa)) form an adenylation (A) domain region. The Carrier domain maps to 585 to 665 (APENEFERDL…DLGTALRKLQ (81 aa)). Position 623 is an O-(pantetheine 4'-phosphoryl)serine (Ser-623). The segment at 684 to 934 (PLWLVHPGVG…MLSPEHVFDF (251 aa)) is thioesterase (TE) domain.

The protein belongs to the NRP synthetase family.

The enzyme catalyses 2 3-(4-hydroxyphenyl)pyruvate + 2 ATP = atromentin + 2 AMP + 2 diphosphate + H(+). It functions in the pathway secondary metabolite biosynthesis. Functionally, nonribosomal peptide synthetase that mediates the biosynthesis of usterphenyllins and uscandidusins, p-terphenyl derivatives. Within the pathway, ucdA condenses two 4-hydroxyphenylpyruvate (HPPA) units to produce atromentin. UcdA first activates HPPA through its A domain to AMP-HPPA. The HPPA unit is then loaded to the T domain and eventually transferred to the TE domain. Another HPPA unit is then loaded onto the T domain. The TE domain then catalyzes the condensation of the two HPPA units and the release of atromentin via cyclization. The pathway begin with the biosynthesis of 4-hydroxyphenylpyruvate (HPPA) from L-tyrosine, possibly by the aminotransferase ucdG. The nonribosomal peptide synthetase ucdA then condenses two HPPA units to produce atromentin. The key step in this pathway is the reduction and dehydration of atromentin to form a terphenyl triol intermediate, performed by the NAD-dependent dehydrogenase ucdB. Further O-methylation by the methyltransferase ucdC forms terphenyllin carrying two methoxy moieties at C-9 and C-12, and subsequent dihydroxylation at C-3 of ring A and C-15 of ring C by the flavin-dependent oxygenase ucdD leads to 3,15-dihydroxyterphenyllin. Prenylation by ucdE at position C-5 of ring A forms usterphenyllin B, and is followed by a second prenylation at position C-14 of ring C to form usterphenyllin A. The following furan ring formation that leads to uscandidusins A and B was proven to be an unexpected spontaneous non-enzymatic reaction. The polypeptide is Nonribosomal peptide synthetase ucdA (Aspergillus ustus).